The primary structure comprises 248 residues: Chromatin target of PRMT1 protein (248 aa).

Ala-2 is subject to N-acetylalanine. Ser-40, Ser-49, and Ser-64 each carry phosphoserine. Residue Lys-70 forms a Glycyl lysine isopeptide (Lys-Gly) (interchain with G-Cter in SUMO2) linkage. The tract at residues 151 to 204 (LRRGGVRGRGGPGRGGLGRGAMGRGGIGGRGRGMIGRGRGGFGGRGRGRGRGRG) is disordered. Residues 153–206 (RGGVRGRGGPGRGGLGRGAMGRGGIGGRGRGMIGRGRGGFGGRGRGRGRGRGAL) form an interaction with PRMT1 region. Over residues 157-195 (RGRGGPGRGGLGRGAMGRGGIGGRGRGMIGRGRGGFGGR) the composition is skewed to gly residues. The GAR motif; involved in 5hmC binding signature appears at 194-203 (GRGRGRGRGR). A Phosphothreonine modification is found at Thr-242.

As to quaternary structure, interacts with PRMT1 and PRMT5. Interacts with the 5FMC complex; the interaction is methylation-dependent. Interacts with FYTTD1, SET and PRC1 complex members CBX4, RNF2 and PHC2; the interactions are methylation-independent. Interacts with ZNF148. Interacts with WDR77 and ER. In terms of processing, asymmetrically methylated by PRMT1. Symmetrically methylated by PRMT5.

The protein localises to the nucleus. It localises to the nucleolus. The protein resides in the nucleoplasm. It is found in the nucleus speckle. In terms of biological role, plays an important role in the ligand-dependent activation of estrogen receptor target genes. May play a role in the silencing of fetal globin genes. Recruits the 5FMC complex to ZNF148, leading to desumoylation of ZNF148 and subsequent transactivation of ZNF148 target genes. Required for the tumorigenicity of glioblastoma cells. Binds to 5-hydroxymethylcytosine (5hmC) and associates with the methylosome complex containing PRMT1, PRMT5, MEP50 and ERH. The CHTOP-methylosome complex associated with 5hmC methylates H4R3 and transactivates genes involved in glioblastomagenesis. The sequence is that of Chromatin target of PRMT1 protein (Chtop) from Rattus norvegicus (Rat).